We begin with the raw amino-acid sequence, 320 residues long: ATP synthase gamma chain (320 aa).

It belongs to the ATPase gamma chain family. F-type ATPases have 2 components, CF(1) - the catalytic core - and CF(0) - the membrane proton channel. CF(1) has five subunits: alpha(3), beta(3), gamma(1), delta(1), epsilon(1). CF(0) has three main subunits: a, b and c.

The protein resides in the cell membrane. In terms of biological role, produces ATP from ADP in the presence of a proton gradient across the membrane. The gamma chain is believed to be important in regulating ATPase activity and the flow of protons through the CF(0) complex. This chain is ATP synthase gamma chain, found in Lactobacillus delbrueckii subsp. bulgaricus (strain ATCC 11842 / DSM 20081 / BCRC 10696 / JCM 1002 / NBRC 13953 / NCIMB 11778 / NCTC 12712 / WDCM 00102 / Lb 14).